Here is a 511-residue protein sequence, read N- to C-terminus: 4,4'-diapophytoene desaturase (4,4'-diapolycopene-forming) (511 aa).

This sequence belongs to the carotenoid/retinoid oxidoreductase family.

The catalysed reaction is 15-cis-4,4'-diapophytoene + 4 FAD + 4 H(+) = all-trans-4,4'-diapolycopene + 4 FADH2. It functions in the pathway carotenoid biosynthesis. In terms of biological role, involved in the biosynthesis of C30 carotenoids. Catalyzes four successive dehydrogenation reactions that lead to the introduction of four double bonds into 4,4'-diapophytoene (dehydrosqualene) to yield 4,4'-diapolycopene. The polypeptide is 4,4'-diapophytoene desaturase (4,4'-diapolycopene-forming) (Methylomonas sp).